A 572-amino-acid polypeptide reads, in one-letter code: Proline--tRNA ligase (572 aa).

This sequence belongs to the class-II aminoacyl-tRNA synthetase family. ProS type 1 subfamily. As to quaternary structure, homodimer.

Its subcellular location is the cytoplasm. It carries out the reaction tRNA(Pro) + L-proline + ATP = L-prolyl-tRNA(Pro) + AMP + diphosphate. In terms of biological role, catalyzes the attachment of proline to tRNA(Pro) in a two-step reaction: proline is first activated by ATP to form Pro-AMP and then transferred to the acceptor end of tRNA(Pro). As ProRS can inadvertently accommodate and process non-cognate amino acids such as alanine and cysteine, to avoid such errors it has two additional distinct editing activities against alanine. One activity is designated as 'pretransfer' editing and involves the tRNA(Pro)-independent hydrolysis of activated Ala-AMP. The other activity is designated 'posttransfer' editing and involves deacylation of mischarged Ala-tRNA(Pro). The misacylated Cys-tRNA(Pro) is not edited by ProRS. The protein is Proline--tRNA ligase of Yersinia enterocolitica serotype O:8 / biotype 1B (strain NCTC 13174 / 8081).